The following is a 614-amino-acid chain: Afadin- and alpha-actinin-binding protein (614 aa).

Coiled-coil stretches lie at residues 131 to 227 (MDHL…IAMD) and 266 to 293 (RQKQ…SLLS). Phosphoserine occurs at positions 290, 293, and 312. The disordered stretch occupies residues 292 to 317 (LSPQKKKPRERVDDSTGTVISDVEED). Residues 374–460 (ISRQDHEQET…RSFTEAAIRL (87 aa)) are a coiled coil. Phosphoserine is present on residues S536, S540, and S542.

The protein belongs to the ADIP family. In terms of assembly, interacts with afadin and alpha-actinin. Interacts with VAV2. Interacts with SSX2 and SSX3. Does not interact with SSX1 and SSX4. Interacts with PCM1. Interacts with WRAP73. As to expression, widely expressed, with the highest expression in brain, intermediate expression in kidney, testis, spinal cord, liver, heart, lung, skeletal muscle, ovary, fetal liver and fetal brain, and little to no expression in pancreas and spleen. All specific brain regions showed intermediate to high expression, with highest expression in amygdala. Also expressed in fetal tissues, mainly in liver and brain.

It is found in the cell junction. The protein resides in the adherens junction. It localises to the nucleus. Its subcellular location is the cytoplasm. The protein localises to the cytoskeleton. It is found in the microtubule organizing center. The protein resides in the centrosome. It localises to the centriolar satellite. Its subcellular location is the cilium basal body. Functionally, belongs to an adhesion system, which plays a role in the organization of homotypic, interneuronal and heterotypic cell-cell adherens junctions (AJs). May connect the nectin-afadin and E-cadherin-catenin system through alpha-actinin and may be involved in organization of the actin cytoskeleton at AJs through afadin and alpha-actinin. Involved in cell movement: localizes at the leading edge of moving cells in response to PDGF and is required for the formation of the leading edge and the promotion of cell movement, possibly via activation of Rac signaling. Acts as a centrosome maturation factor, probably by maintaining the integrity of the pericentriolar material and proper microtubule nucleation at mitotic spindle poles. The function seems to implicate at least in part WRAP73; the SSX2IP:WRAP73 complex is proposed to act as regulator of spindle anchoring at the mitotic centrosome. Involved in ciliogenesis. It is required for targeted recruitment of the BBSome, CEP290, RAB8, and SSTR3 to the cilia. The protein is Afadin- and alpha-actinin-binding protein (SSX2IP) of Homo sapiens (Human).